A 494-amino-acid chain; its full sequence is UDP-N-acetylmuramoyl-L-alanyl-D-glutamate--2,6-diaminopimelate ligase (494 aa).

Residue Ser30 coordinates UDP-N-acetyl-alpha-D-muramoyl-L-alanyl-D-glutamate. Position 110–116 (110–116 (GTNGKTS)) interacts with ATP. UDP-N-acetyl-alpha-D-muramoyl-L-alanyl-D-glutamate is bound by residues 152–153 (TT), Ser179, and Arg187. Lys219 is subject to N6-carboxylysine. Meso-2,6-diaminopimelate contacts are provided by residues Arg380, 404–407 (DNPR), Gly456, and Glu460. The Meso-diaminopimelate recognition motif signature appears at 404–407 (DNPR).

This sequence belongs to the MurCDEF family. MurE subfamily. Requires Mg(2+) as cofactor. In terms of processing, carboxylation is probably crucial for Mg(2+) binding and, consequently, for the gamma-phosphate positioning of ATP.

The protein resides in the cytoplasm. It carries out the reaction UDP-N-acetyl-alpha-D-muramoyl-L-alanyl-D-glutamate + meso-2,6-diaminopimelate + ATP = UDP-N-acetyl-alpha-D-muramoyl-L-alanyl-gamma-D-glutamyl-meso-2,6-diaminopimelate + ADP + phosphate + H(+). The protein operates within cell wall biogenesis; peptidoglycan biosynthesis. In terms of biological role, catalyzes the addition of meso-diaminopimelic acid to the nucleotide precursor UDP-N-acetylmuramoyl-L-alanyl-D-glutamate (UMAG) in the biosynthesis of bacterial cell-wall peptidoglycan. The sequence is that of UDP-N-acetylmuramoyl-L-alanyl-D-glutamate--2,6-diaminopimelate ligase from Alkaliphilus metalliredigens (strain QYMF).